The sequence spans 163 residues: Probable ribosome biogenesis protein RLP24 (163 aa).

Belongs to the eukaryotic ribosomal protein eL24 family. Associated with nucleolar and cytoplasmic pre-60S particles. At the end of biogenesis it dissociates from cytoplasmic pre-60S particles and is likely to be exchanged for its ribosomal homolog, RPL24.

The protein localises to the nucleus. The protein resides in the nucleolus. In terms of biological role, involved in the biogenesis of the 60S ribosomal subunit. Ensures the docking of GTPBP4/NOG1 to pre-60S particles. The polypeptide is Probable ribosome biogenesis protein RLP24 (Rsl24d1) (Rattus norvegicus (Rat)).